The following is a 329-amino-acid chain: Probable fructokinase-2 (329 aa).

It belongs to the carbohydrate kinase PfkB family.

The enzyme catalyses D-fructose + ATP = D-fructose 6-phosphate + ADP + H(+). It participates in glycan biosynthesis; starch biosynthesis. May play an important role in maintaining the flux of carbon towards starch formation. The polypeptide is Probable fructokinase-2 (Arabidopsis thaliana (Mouse-ear cress)).